Reading from the N-terminus, the 402-residue chain is Homoserine O-acetyltransferase (402 aa).

Over residues 1-17 (MDWQTTSADTAPSSFIT) the composition is skewed to polar residues. Residues 1-39 (MDWQTTSADTAPSSFITEEQDRSLFGKPPASGAWKESDP) are disordered. The AB hydrolase-1 domain maps to 78–388 (NAVLVLHALT…HFGHDGFLIE (311 aa)). S183 acts as the Nucleophile in catalysis. R255 lines the substrate pocket. Catalysis depends on residues D349 and H382. D383 is a substrate binding site.

The protein belongs to the AB hydrolase superfamily. MetX family. Homodimer.

Its subcellular location is the cytoplasm. The enzyme catalyses L-homoserine + acetyl-CoA = O-acetyl-L-homoserine + CoA. The protein operates within amino-acid biosynthesis; L-methionine biosynthesis via de novo pathway; O-acetyl-L-homoserine from L-homoserine: step 1/1. Functionally, transfers an acetyl group from acetyl-CoA to L-homoserine, forming acetyl-L-homoserine. The sequence is that of Homoserine O-acetyltransferase from Leifsonia xyli subsp. xyli (strain CTCB07).